The chain runs to 169 residues: uncharacterized protein (169 aa).

The region spanning 28 to 157 (ELHLVVHVCI…EFIPYFFLNQ (130 aa)) is the Nudix hydrolase domain. Positions 65–87 (AGSALKGETSRQAAEREVKEELG) match the Nudix box motif. Residues Glu81 and Glu85 each contribute to the Mg(2+) site.

It belongs to the Nudix hydrolase family. The cofactor is Mg(2+).

This is an uncharacterized protein from Listeria innocua serovar 6a (strain ATCC BAA-680 / CLIP 11262).